We begin with the raw amino-acid sequence, 251 residues long: MILYEYPFNERIRTLLRLEDLFERFAFFLAQEDPREHHVALTTLFEIAEVTGRADLKSDLMKELERQRQTLAPFRGNPGIEQNALEAVLGEIEQTLANLAQMQGKTGQHLVDNEWLASIRSRAVIPGGTCKFDLPSYYAWQQWPAEQRRQDIAKWMLPMLPLRDAAAIVLRLARESGQASKVMAMQGSYQQMLSGRSYQLMQVRVPPELRVIPEASANKYMLWVRFTMQDGDVRPRAVDIDVPFHLTLCNL.

The protein belongs to the ZapD family. In terms of assembly, interacts with FtsZ.

It localises to the cytoplasm. In terms of biological role, cell division factor that enhances FtsZ-ring assembly. Directly interacts with FtsZ and promotes bundling of FtsZ protofilaments, with a reduction in FtsZ GTPase activity. In Burkholderia cenocepacia (strain HI2424), this protein is Cell division protein ZapD.